We begin with the raw amino-acid sequence, 92 residues long: Cell division protein FtsB (92 aa).

The Cytoplasmic segment spans residues 1–3; sequence MRF. A helical membrane pass occupies residues 4-21; the sequence is FQVGLLCLALFVQYRLWF. Residues 22 to 92 are Periplasmic-facing; the sequence is GHNGVQDYTR…TFIRVLPAQQ (71 aa). Positions 40-73 form a coiled coil; that stretch reads LQTNEKLIKRNKVLTADIEDLKLGHEGIEERARN.

The protein belongs to the FtsB family. In terms of assembly, part of a complex composed of FtsB, FtsL and FtsQ.

It localises to the cell inner membrane. Functionally, essential cell division protein. May link together the upstream cell division proteins, which are predominantly cytoplasmic, with the downstream cell division proteins, which are predominantly periplasmic. This Pseudoalteromonas translucida (strain TAC 125) protein is Cell division protein FtsB.